A 118-amino-acid polypeptide reads, in one-letter code: Elongin-B (118 aa).

At Met1 the chain carries N-acetylmethionine. Residues 1-79 (MDVFLMIRRH…QAPATVGLAF (79 aa)) form the Ubiquitin-like domain. Thr84 carries the phosphothreonine modification. The disordered stretch occupies residues 91-118 (EPFSSPPELPDVMKPQDSGGSANEQAVQ). A phosphoserine mark is found at Ser108 and Ser111. The segment covering 108–118 (SGGSANEQAVQ) has biased composition (polar residues).

Belongs to the Elongin B family. Heterotrimer of an A (ELOA, ELOA2 or ELOA3P), ELOB and ELOC subunit. The elongin BC complex interacts with EPOP; leading to recruit the elongin BC complex to Polycomb group (PcG) target genes, thereby restricting excessive activity of the PRC2/EED-EZH2 complex. Component of multiple cullin-RING E3 ubiquitin-protein ligase complexes composed of Elongin BC (ELOB and ELOC), a cullin (either CUL2 or CUL5), a catalytic subunit (either RBX1 or RNF7/RBX2), as well as a substrate adapter protein that can be either ASB2, ASB9, ASB11, KLHDC2, KLHDC3, KLHDC10, APPBP2, FEM1A, FEM1B, FEM1C, LRR1, PCMTD1, SOCS1, SOCS2, SOCS5, SPSB1, SPSB3, ELOA, VHL, WSB1 or RAB40C. As part of the Elongin BC E3 ubiquitin ligase complex; interacts with NRBP1. May also interact with DCUN1D1, DCUN1D2, DCUN1D3 and DCUN1D5. May form oligomers as a KLHDC2/KLHDC3-ELOB-ELOC complex; this interaction is autoinhibitory for the E3 ligase complex as the substrate-binding site of KLHDC2/KLHDC3 is blocked in the oligomer.

The protein resides in the nucleus. It functions in the pathway protein modification; protein ubiquitination. SIII, also known as elongin, is a general transcription elongation factor that increases the RNA polymerase II transcription elongation past template-encoded arresting sites. Subunit A is transcriptionally active and its transcription activity is strongly enhanced by binding to the dimeric complex of the SIII regulatory subunits B and C (elongin BC complex). In embryonic stem cells, the elongin BC complex is recruited by EPOP to Polycomb group (PcG) target genes in order generate genomic region that display both active and repressive chromatin properties, an important feature of pluripotent stem cells. Its function is as follows. Core component of multiple cullin-2 and cullin-5-RING E3 ubiquitin-protein ligase complexes (ECS complexes), which mediate the ubiquitination of target proteins. By binding to BC-box motifs it seems to link target recruitment subunits, like VHL and members of the SOCS box family, to Cullin/RBX1 modules that activate E2 ubiquitination enzymes. Component the von Hippel-Lindau ubiquitination complex CBC(VHL). A number of ECS complexes (containing either KLHDC2, KLHDC3, KLHDC10, APPBP2, FEM1A, FEM1B or FEM1C as substrate-recognition component) are part of the DesCEND (destruction via C-end degrons) pathway, which recognizes a C-degron located at the extreme C terminus of target proteins, leading to their ubiquitination and degradation. The ECS(ASB9) complex mediates ubiquitination and degradation of CKB. As part of a multisubunit ubiquitin ligase complex, polyubiquitinates monoubiquitinated POLR2A. ECS(LRR1) ubiquitinates MCM7 and promotes CMG replisome disassembly by VCP and chromatin extraction during S-phase. As part of the ECS(RAB40C) complex, mediates ANKRD28 ubiquitination and degradation, thereby inhibiting protein phosphatase 6 (PP6) complex activity and focal adhesion assembly during cell migration. This chain is Elongin-B, found in Mus musculus (Mouse).